The sequence spans 614 residues: NEDD8 ultimate buster 1 (614 aa).

2 coiled-coil regions span residues 36 to 71 (LAVK…IERG) and 151 to 206 (NVKA…MVVD). UBA domains follow at residues 373–413 (YIDP…ISNR), 423–469 (EEKE…LLSN), and 488–528 (SPSQ…LAHH). The short motif at 413 to 430 (RREELAQIRKEEKEKRRR) is the Nuclear localization signal element. Residues 426 to 473 (EKRRRRLENVNTLRGMGYSTQAAKQALHQARGNLDDALKVLLSNPHMW) are NEDD8-binding 1. Residues 531-590 (SLPPDLQFSGEDSSPTPSTSPSDSAGTSSASTDEDMETEAVNEILEDIPEHEEDYLDSTL) form a disordered region. Low complexity predominate over residues 539–561 (SGEDSSPTPSTSPSDSAGTSSAS). The tract at residues 549-597 (TSPSDSAGTSSASTDEDMETEAVNEILEDIPEHEEDYLDSTLEDEEVII) is NEDD8-binding 2. Residues 562–590 (TDEDMETEAVNEILEDIPEHEEDYLDSTL) show a composition bias toward acidic residues.

As to quaternary structure, directly interacts with NEDD8 and PSMD4/S5a, a member of the regulatory subunit of the 26S proteasome. Interacts with AIPL1. The interaction with UBD via UBA domains facilitates the linking of UBD-conjugated target protein to the proteasome complex and accelerates UBD degradation and that of its conjugates.

Its subcellular location is the nucleus. In terms of biological role, specific down-regulator of the NEDD8 conjugation system. Recruits NEDD8, UBD, and their conjugates to the proteasome for degradation. The polypeptide is NEDD8 ultimate buster 1 (Nub1) (Mus musculus (Mouse)).